The chain runs to 571 residues: Oxysterol-binding protein 11 (571 aa).

The tract at residues 1 to 73 (MSNFFKKLVK…IGEQIDTLDD (73 aa)) is disordered. Residues 33 to 42 (NGNQVVPDTA) show a composition bias toward polar residues. Over residues 43–54 (SSYSDDSNSLSD) the composition is skewed to low complexity. Positions 387 to 420 (YLEREENKLANKEKNKIEEREREKRKTRESRKEI) form a coiled coil.

This sequence belongs to the OSBP family.

The polypeptide is Oxysterol-binding protein 11 (osbK) (Dictyostelium discoideum (Social amoeba)).